A 229-amino-acid polypeptide reads, in one-letter code: 3-isopropylmalate dehydratase small subunit (229 aa).

The segment at 208–229 (KIESAREPDDDWTGPLADRGII) is disordered.

This sequence belongs to the LeuD family. LeuD type 1 subfamily. In terms of assembly, heterodimer of LeuC and LeuD.

It carries out the reaction (2R,3S)-3-isopropylmalate = (2S)-2-isopropylmalate. It participates in amino-acid biosynthesis; L-leucine biosynthesis; L-leucine from 3-methyl-2-oxobutanoate: step 2/4. Functionally, catalyzes the isomerization between 2-isopropylmalate and 3-isopropylmalate, via the formation of 2-isopropylmaleate. This chain is 3-isopropylmalate dehydratase small subunit, found in Bifidobacterium longum subsp. infantis (strain ATCC 15697 / DSM 20088 / JCM 1222 / NCTC 11817 / S12).